A 238-amino-acid chain; its full sequence is RNA pyrophosphohydrolase (238 aa).

Residues 6-149 (GFRPNVGIIL…KREVYQMALS (144 aa)) enclose the Nudix hydrolase domain. The Nudix box signature appears at 38-59 (GGIKYGETPEQAMYRELHEEVG). A disordered region spans residues 161–238 (APLSPYGRGG…PDDTPSKDSL (78 aa)). Residues 171 to 181 (PHRERDGRDNR) are compositionally biased toward basic and acidic residues. Positions 188–199 (RNDQNTRGQRQP) are enriched in polar residues. Low complexity predominate over residues 204–217 (VTTSTVIVETVITS).

It belongs to the Nudix hydrolase family. RppH subfamily. Requires a divalent metal cation as cofactor.

Accelerates the degradation of transcripts by removing pyrophosphate from the 5'-end of triphosphorylated RNA, leading to a more labile monophosphorylated state that can stimulate subsequent ribonuclease cleavage. This chain is RNA pyrophosphohydrolase, found in Ralstonia nicotianae (strain ATCC BAA-1114 / GMI1000) (Ralstonia solanacearum).